A 275-amino-acid polypeptide reads, in one-letter code: 2-dehydro-3-deoxyphosphooctonate aldolase (275 aa).

The protein belongs to the KdsA family.

The protein resides in the cytoplasm. It catalyses the reaction D-arabinose 5-phosphate + phosphoenolpyruvate + H2O = 3-deoxy-alpha-D-manno-2-octulosonate-8-phosphate + phosphate. Its pathway is carbohydrate biosynthesis; 3-deoxy-D-manno-octulosonate biosynthesis; 3-deoxy-D-manno-octulosonate from D-ribulose 5-phosphate: step 2/3. The protein operates within bacterial outer membrane biogenesis; lipopolysaccharide biosynthesis. In Francisella philomiragia subsp. philomiragia (strain ATCC 25017 / CCUG 19701 / FSC 153 / O#319-036), this protein is 2-dehydro-3-deoxyphosphooctonate aldolase.